The sequence spans 411 residues: GTPase Obg (411 aa).

Residues 1–157 (MQFIDEARFV…REIRLELRVL (157 aa)) form the Obg domain. The tract at residues 20–45 (AVSFHREKYRPRGGPDGGRGGDGGSV) is disordered. The span at 33-43 (GPDGGRGGDGG) shows a compositional bias: gly residues. Residues 158–330 (SDVGLVGLPN…LERSAEAAPR (173 aa)) form the OBG-type G domain. GTP contacts are provided by residues 164-171 (GLPNAGKS), 189-193 (FTTLT), 212-215 (DIPG), 276-279 (NKVD), and 311-313 (ARL). The Mg(2+) site is built by S171 and T191. Positions 335–411 (VFRPSWRGLR…RIGDVSFEFR (77 aa)) constitute an OCT domain.

This sequence belongs to the TRAFAC class OBG-HflX-like GTPase superfamily. OBG GTPase family. As to quaternary structure, monomer. The cofactor is Mg(2+).

The protein localises to the cytoplasm. An essential GTPase which binds GTP, GDP and possibly (p)ppGpp with moderate affinity, with high nucleotide exchange rates and a fairly low GTP hydrolysis rate. Plays a role in control of the cell cycle, stress response, ribosome biogenesis and in those bacteria that undergo differentiation, in morphogenesis control. This is GTPase Obg from Rubrobacter xylanophilus (strain DSM 9941 / JCM 11954 / NBRC 16129 / PRD-1).